The primary structure comprises 265 residues: Glutamate racemase (265 aa).

Residues 12–13 (DS) and 44–45 (YG) contribute to the substrate site. Cys-75 functions as the Proton donor/acceptor in the catalytic mechanism. 76 to 77 (NT) is a substrate binding site. The active-site Proton donor/acceptor is the Cys-186. Substrate is bound at residue 187–188 (TH).

It belongs to the aspartate/glutamate racemases family.

It catalyses the reaction L-glutamate = D-glutamate. Its pathway is cell wall biogenesis; peptidoglycan biosynthesis. In terms of biological role, provides the (R)-glutamate required for cell wall biosynthesis. In Pseudomonas putida (strain ATCC 700007 / DSM 6899 / JCM 31910 / BCRC 17059 / LMG 24140 / F1), this protein is Glutamate racemase.